Reading from the N-terminus, the 253-residue chain is Chitooligosaccharide deacetylase (253 aa).

Mg(2+) is bound by residues histidine 61 and histidine 126.

Belongs to the YdjC deacetylase family. ChbG subfamily. Homodimer. Mg(2+) serves as cofactor.

It localises to the cytoplasm. It catalyses the reaction N,N'-diacetylchitobiose + H2O = N-acetyl-beta-D-glucosaminyl-(1-&gt;4)-D-glucosamine + acetate. The enzyme catalyses diacetylchitobiose-6'-phosphate + H2O = N'-monoacetylchitobiose-6'-phosphate + acetate. The protein operates within glycan degradation; chitin degradation. In terms of biological role, involved in the degradation of chitin. ChbG is essential for growth on the acetylated chitooligosaccharides chitobiose and chitotriose but is dispensable for growth on cellobiose and chitosan dimer, the deacetylated form of chitobiose. Deacetylation of chitobiose-6-P and chitotriose-6-P is necessary for both the activation of the chb promoter by the regulatory protein ChbR and the hydrolysis of phosphorylated beta-glucosides by the phospho-beta-glucosidase ChbF. Catalyzes the removal of only one acetyl group from chitobiose-6-P to yield monoacetylchitobiose-6-P, the inducer of ChbR and the substrate of ChbF. This chain is Chitooligosaccharide deacetylase, found in Serratia marcescens.